A 440-amino-acid chain; its full sequence is Mitochondrial translation factor 2 (440 aa).

A mitochondrion-targeting transit peptide spans 1 to 15 (MIRTSSILKNCNYRY).

The protein resides in the mitochondrion matrix. Functionally, required for the processing and/or for the stability of the CYTB and COX1 intron-containing pre-mRNAs and of the ATP6 transcript. Could be a stem-loop RNA-binding protein that plays a role in determining RNA stability. The protein is Mitochondrial translation factor 2 (MTF2) of Saccharomyces cerevisiae (strain ATCC 204508 / S288c) (Baker's yeast).